A 132-amino-acid polypeptide reads, in one-letter code: Large ribosomal subunit protein bL17 (132 aa).

It belongs to the bacterial ribosomal protein bL17 family. As to quaternary structure, part of the 50S ribosomal subunit. Contacts protein L32.

This Cellvibrio japonicus (strain Ueda107) (Pseudomonas fluorescens subsp. cellulosa) protein is Large ribosomal subunit protein bL17.